A 116-amino-acid polypeptide reads, in one-letter code: Small ribosomal subunit protein bS6 (116 aa).

The segment at 94-116 is disordered; that stretch reads ESITEPSPLTKPKEDRKGDSEAA. The segment covering 104-116 has biased composition (basic and acidic residues); sequence KPKEDRKGDSEAA.

The protein belongs to the bacterial ribosomal protein bS6 family.

In terms of biological role, binds together with bS18 to 16S ribosomal RNA. This is Small ribosomal subunit protein bS6 from Idiomarina loihiensis (strain ATCC BAA-735 / DSM 15497 / L2-TR).